The sequence spans 466 residues: 3-isopropylmalate dehydratase large subunit (466 aa).

C347, C407, and C410 together coordinate [4Fe-4S] cluster.

The protein belongs to the aconitase/IPM isomerase family. LeuC type 1 subfamily. As to quaternary structure, heterodimer of LeuC and LeuD. [4Fe-4S] cluster is required as a cofactor.

The enzyme catalyses (2R,3S)-3-isopropylmalate = (2S)-2-isopropylmalate. It functions in the pathway amino-acid biosynthesis; L-leucine biosynthesis; L-leucine from 3-methyl-2-oxobutanoate: step 2/4. Catalyzes the isomerization between 2-isopropylmalate and 3-isopropylmalate, via the formation of 2-isopropylmaleate. In Buchnera aphidicola subsp. Diuraphis noxia, this protein is 3-isopropylmalate dehydratase large subunit.